Consider the following 453-residue polypeptide: Homogentisate 1,2-dioxygenase (453 aa).

The active-site Proton acceptor is histidine 306. The Fe cation site is built by histidine 349 and glutamate 355. Positions 364 and 385 each coordinate homogentisate. Histidine 385 is a Fe cation binding site.

This sequence belongs to the homogentisate dioxygenase family. Hexamer; dimer of trimers. Fe cation serves as cofactor.

The enzyme catalyses homogentisate + O2 = 4-maleylacetoacetate + H(+). It functions in the pathway amino-acid degradation; L-phenylalanine degradation; acetoacetate and fumarate from L-phenylalanine: step 4/6. In terms of biological role, involved in the catabolism of homogentisate (2,5-dihydroxyphenylacetate or 2,5-OH-PhAc), a central intermediate in the degradation of phenylalanine and tyrosine. Catalyzes the oxidative ring cleavage of the aromatic ring of homogentisate to yield maleylacetoacetate. The chain is Homogentisate 1,2-dioxygenase from Rhizobium leguminosarum bv. trifolii (strain WSM2304).